Consider the following 359-residue polypeptide: Phospho-N-acetylmuramoyl-pentapeptide-transferase (359 aa).

10 helical membrane-spanning segments follow: residues 3–23 (QILF…PVLI), 53–73 (GGVA…LIGI), 84–104 (GLLV…DDFI), 117–137 (TAKL…ALQF), 156–176 (IATV…LVSA), 187–207 (LDGL…IITF), 231–251 (LALI…WNAA), 255–275 (IFMG…LSIT), 283–303 (VVIG…VAVF), and 330–350 (VIIR…ALFY).

It belongs to the glycosyltransferase 4 family. MraY subfamily. Mg(2+) serves as cofactor.

The protein localises to the cell membrane. It catalyses the reaction UDP-N-acetyl-alpha-D-muramoyl-L-alanyl-gamma-D-glutamyl-meso-2,6-diaminopimeloyl-D-alanyl-D-alanine + di-trans,octa-cis-undecaprenyl phosphate = di-trans,octa-cis-undecaprenyl diphospho-N-acetyl-alpha-D-muramoyl-L-alanyl-D-glutamyl-meso-2,6-diaminopimeloyl-D-alanyl-D-alanine + UMP. The protein operates within cell wall biogenesis; peptidoglycan biosynthesis. Functionally, catalyzes the initial step of the lipid cycle reactions in the biosynthesis of the cell wall peptidoglycan: transfers peptidoglycan precursor phospho-MurNAc-pentapeptide from UDP-MurNAc-pentapeptide onto the lipid carrier undecaprenyl phosphate, yielding undecaprenyl-pyrophosphoryl-MurNAc-pentapeptide, known as lipid I. This chain is Phospho-N-acetylmuramoyl-pentapeptide-transferase, found in Rhodococcus jostii (strain RHA1).